The chain runs to 550 residues: Chaperonin GroEL (550 aa).

ATP-binding positions include 30-33 (TLGP), Lys-51, 87-91 (DGTTT), Gly-415, 478-480 (NAA), and Asp-494.

It belongs to the chaperonin (HSP60) family. As to quaternary structure, forms a cylinder of 14 subunits composed of two heptameric rings stacked back-to-back. Interacts with the co-chaperonin GroES.

Its subcellular location is the cytoplasm. The catalysed reaction is ATP + H2O + a folded polypeptide = ADP + phosphate + an unfolded polypeptide.. In terms of biological role, together with its co-chaperonin GroES, plays an essential role in assisting protein folding. The GroEL-GroES system forms a nano-cage that allows encapsulation of the non-native substrate proteins and provides a physical environment optimized to promote and accelerate protein folding. In Desulfosudis oleivorans (strain DSM 6200 / JCM 39069 / Hxd3) (Desulfococcus oleovorans), this protein is Chaperonin GroEL.